Consider the following 189-residue polypeptide: Probable nicotinate-nucleotide adenylyltransferase (189 aa).

This sequence belongs to the NadD family.

It catalyses the reaction nicotinate beta-D-ribonucleotide + ATP + H(+) = deamido-NAD(+) + diphosphate. The protein operates within cofactor biosynthesis; NAD(+) biosynthesis; deamido-NAD(+) from nicotinate D-ribonucleotide: step 1/1. Functionally, catalyzes the reversible adenylation of nicotinate mononucleotide (NaMN) to nicotinic acid adenine dinucleotide (NaAD). In Bacillus cereus (strain B4264), this protein is Probable nicotinate-nucleotide adenylyltransferase.